Consider the following 327-residue polypeptide: D-threonate 4-phosphate dehydrogenase (327 aa).

Substrate contacts are provided by histidine 139 and threonine 140. A divalent metal cation-binding residues include histidine 169, histidine 213, and histidine 268. 3 residues coordinate substrate: lysine 276, asparagine 285, and arginine 294.

Belongs to the PdxA family. PdxA2 subfamily. Homodimer. A divalent metal cation is required as a cofactor.

The enzyme catalyses 4-O-phospho-D-threonate + NAD(+) = dihydroxyacetone phosphate + CO2 + NADH. Its function is as follows. Catalyzes the NAD-dependent oxidation and subsequent decarboxylation of D-threonate 4-phosphate to produce dihydroxyacetone phosphate (DHAP). Can also use 4-hydroxy-L-threonine 4-phosphate as substrate. This is D-threonate 4-phosphate dehydrogenase from Salmonella typhimurium (strain LT2 / SGSC1412 / ATCC 700720).